Here is a 196-residue protein sequence, read N- to C-terminus: Large ribosomal subunit protein eL15 (196 aa).

The tract at residues 155–196 is disordered; the sequence is THRGRAERGLTSAGKKGRGQRRKGKGTEKNYPSVQAHDRRGK. Residues 169 to 178 are compositionally biased toward basic residues; that stretch reads KKGRGQRRKG.

The protein belongs to the eukaryotic ribosomal protein eL15 family.

The protein is Large ribosomal subunit protein eL15 of Methanocella arvoryzae (strain DSM 22066 / NBRC 105507 / MRE50).